The sequence spans 305 residues: Porphobilinogen deaminase (305 aa).

At cysteine 243 the chain carries S-(dipyrrolylmethanemethyl)cysteine.

This sequence belongs to the HMBS family. In terms of assembly, monomer. Dipyrromethane serves as cofactor.

The catalysed reaction is 4 porphobilinogen + H2O = hydroxymethylbilane + 4 NH4(+). It functions in the pathway porphyrin-containing compound metabolism; protoporphyrin-IX biosynthesis; coproporphyrinogen-III from 5-aminolevulinate: step 2/4. Its function is as follows. Tetrapolymerization of the monopyrrole PBG into the hydroxymethylbilane pre-uroporphyrinogen in several discrete steps. This Limosilactobacillus reuteri (strain DSM 20016) (Lactobacillus reuteri) protein is Porphobilinogen deaminase.